A 159-amino-acid polypeptide reads, in one-letter code: SsrA-binding protein (159 aa).

The interval 131-159 (KGKKLHDKRESEKERDWNRQKSRLLKDNG) is disordered. Residues 137-159 (DKRESEKERDWNRQKSRLLKDNG) are compositionally biased toward basic and acidic residues.

The protein belongs to the SmpB family.

The protein resides in the cytoplasm. Its function is as follows. Required for rescue of stalled ribosomes mediated by trans-translation. Binds to transfer-messenger RNA (tmRNA), required for stable association of tmRNA with ribosomes. tmRNA and SmpB together mimic tRNA shape, replacing the anticodon stem-loop with SmpB. tmRNA is encoded by the ssrA gene; the 2 termini fold to resemble tRNA(Ala) and it encodes a 'tag peptide', a short internal open reading frame. During trans-translation Ala-aminoacylated tmRNA acts like a tRNA, entering the A-site of stalled ribosomes, displacing the stalled mRNA. The ribosome then switches to translate the ORF on the tmRNA; the nascent peptide is terminated with the 'tag peptide' encoded by the tmRNA and targeted for degradation. The ribosome is freed to recommence translation, which seems to be the essential function of trans-translation. This is SsrA-binding protein from Rhizobium leguminosarum bv. trifolii (strain WSM2304).